Here is a 235-residue protein sequence, read N- to C-terminus: Small ribosomal subunit protein uS3 (235 aa).

Residues 39-107 (IRDFIKKECH…ELHLNIVEVR (69 aa)) form the KH type-2 domain. The disordered stretch occupies residues 213–235 (AARDRKAQELQDGPAPRGAGGRR).

The protein belongs to the universal ribosomal protein uS3 family. In terms of assembly, part of the 30S ribosomal subunit. Forms a tight complex with proteins S10 and S14.

In terms of biological role, binds the lower part of the 30S subunit head. Binds mRNA in the 70S ribosome, positioning it for translation. This is Small ribosomal subunit protein uS3 from Roseobacter denitrificans (strain ATCC 33942 / OCh 114) (Erythrobacter sp. (strain OCh 114)).